Reading from the N-terminus, the 25-residue chain is ATP-dependent 6-phosphofructokinase 2 (25 aa).

Gly11 provides a ligand contact to ATP.

Belongs to the phosphofructokinase type A (PFKA) family. ATP-dependent PFK group I subfamily. Prokaryotic clade 'B1' sub-subfamily. Homotetramer. It depends on Mg(2+) as a cofactor.

Its subcellular location is the cytoplasm. It catalyses the reaction beta-D-fructose 6-phosphate + ATP = beta-D-fructose 1,6-bisphosphate + ADP + H(+). The protein operates within carbohydrate degradation; glycolysis; D-glyceraldehyde 3-phosphate and glycerone phosphate from D-glucose: step 3/4. In contrast with PFK1 this enzyme is not affected by phosphoenolpyruvate. Functionally, catalyzes the phosphorylation of D-fructose 6-phosphate to fructose 1,6-bisphosphate by ATP, the first committing step of glycolysis. The protein is ATP-dependent 6-phosphofructokinase 2 (pfkA2) of Thermus thermophilus (strain ATCC 27634 / DSM 579 / HB8).